The chain runs to 446 residues: tRNA-2-methylthio-N(6)-dimethylallyladenosine synthase (446 aa).

The MTTase N-terminal domain maps to K2–E119. [4Fe-4S] cluster contacts are provided by C11, C48, C82, C156, C160, and C163. A Radical SAM core domain is found at R142 to N376. Residues R377–T440 form the TRAM domain.

The protein belongs to the methylthiotransferase family. MiaB subfamily. Monomer. [4Fe-4S] cluster is required as a cofactor.

The protein localises to the cytoplasm. The enzyme catalyses N(6)-dimethylallyladenosine(37) in tRNA + (sulfur carrier)-SH + AH2 + 2 S-adenosyl-L-methionine = 2-methylsulfanyl-N(6)-dimethylallyladenosine(37) in tRNA + (sulfur carrier)-H + 5'-deoxyadenosine + L-methionine + A + S-adenosyl-L-homocysteine + 2 H(+). Its function is as follows. Catalyzes the methylthiolation of N6-(dimethylallyl)adenosine (i(6)A), leading to the formation of 2-methylthio-N6-(dimethylallyl)adenosine (ms(2)i(6)A) at position 37 in tRNAs that read codons beginning with uridine. The chain is tRNA-2-methylthio-N(6)-dimethylallyladenosine synthase from Thiobacillus denitrificans (strain ATCC 25259 / T1).